Reading from the N-terminus, the 770-residue chain is Glutamate carboxypeptidase 2 homolog (770 aa).

Topologically, residues 1–25 (MPYVGVGAQTVSTSLTGAPMVKAYI) are cytoplasmic. Residues 26–42 (AIAASLIFVFCIAALGV) traverse the membrane as a helical; Signal-anchor for type II membrane protein segment. The Extracellular segment spans residues 43 to 770 (HHSERKFNKF…CVVNTLRDVI (728 aa)). 2 N-linked (GlcNAc...) asparagine glycosylation sites follow: N175 and N337. The tract at residues 282 to 597 (SKKELFKGRT…QYWAELAKTF (316 aa)) is catalytic. Positions 387 and 397 each coordinate Zn(2+). N417 carries an N-linked (GlcNAc...) asparagine glycan. Residue E435 is the Nucleophile of the active site. Residues E436 and D464 each contribute to the Zn(2+) site. N-linked (GlcNAc...) asparagine glycans are attached at residues N469, N546, and N551. H562 contributes to the Zn(2+) binding site. N-linked (GlcNAc...) asparagine glycans are attached at residues N579, N606, and N630.

The protein belongs to the peptidase M28 family. M28B subfamily. It depends on Zn(2+) as a cofactor.

The protein localises to the membrane. The catalysed reaction is Release of an unsubstituted, C-terminal glutamyl residue, typically from Ac-Asp-Glu or folylpoly-gamma-glutamates.. This is Glutamate carboxypeptidase 2 homolog from Caenorhabditis elegans.